The chain runs to 592 residues: ATP-dependent lipid A-core flippase (592 aa).

Helical transmembrane passes span 31 to 51, 76 to 96, 134 to 154, 161 to 181, 261 to 281, and 288 to 308; these read LSSF…EGII, AMLV…TYFL, AVIF…ITLV, LALL…VAVI, VTQF…MVQA, and VGGF…LKHL. Residues 35–317 enclose the ABC transmembrane type-1 domain; sequence ILAMVAMGVV…LTDVNQPMQR (283 aa). In terms of domain architecture, ABC transporter spans 349–587; the sequence is LRFEHVTFRY…DGLYAGLHRI (239 aa). 383-390 contributes to the ATP binding site; the sequence is GPSGSGKT.

The protein belongs to the ABC transporter superfamily. Lipid exporter (TC 3.A.1.106) family. As to quaternary structure, homodimer.

The protein localises to the cell inner membrane. The enzyme catalyses ATP + H2O + lipid A-core oligosaccharideSide 1 = ADP + phosphate + lipid A-core oligosaccharideSide 2.. In terms of biological role, involved in lipopolysaccharide (LPS) biosynthesis. Translocates lipid A-core from the inner to the outer leaflet of the inner membrane. Transmembrane domains (TMD) form a pore in the inner membrane and the ATP-binding domain (NBD) is responsible for energy generation. This Ralstonia nicotianae (strain ATCC BAA-1114 / GMI1000) (Ralstonia solanacearum) protein is ATP-dependent lipid A-core flippase.